The primary structure comprises 325 residues: Beta-1,3-galactosyltransferase brn (325 aa).

At 1–7 (MQSKHRK) the chain is on the cytoplasmic side. A helical; Signal-anchor for type II membrane protein transmembrane segment spans residues 8-28 (LLLRCLLVLPLILLVDYCGLL). The Lumenal segment spans residues 29–325 (THLHELNFER…WNECRSANYA (297 aa)). Residues Asn149 and Asn166 are each glycosylated (N-linked (GlcNAc...) asparagine).

This sequence belongs to the glycosyltransferase 31 family.

It is found in the golgi apparatus membrane. It catalyses the reaction a ganglioside GM2 (d18:1(4E)) + UDP-alpha-D-galactose = a ganglioside GM1 (d18:1(4E)) + UDP + H(+). Its function is as follows. Neurogenic protein essential for the development and maintenance of epithelial structure. Required in the germline for establishing the follicular epithelium and for determining the dorsal-ventral polarity. Collaborates with Notch on the apical surface of follicle cells to mediate germline-follicle cell adhesion. Brn has a role in chorion formation. This chain is Beta-1,3-galactosyltransferase brn (brn), found in Drosophila melanogaster (Fruit fly).